The chain runs to 603 residues: NADPH-dependent diflavin oxidoreductase 1 (603 aa).

One can recognise a Flavodoxin-like domain in the interval 8 to 152; that stretch reads VLVLYGSETG…SFVRWTGRLY (145 aa). FMN-binding positions include 14–19, 61–64, 99–108, and E134; these read SETGNA, STTG, and LGDSTYLKFN. Residues 210 to 457 enclose the FAD-binding FR-type domain; the sequence is PDGWTATLVG…RKPVLSPIHG (248 aa). FAD contacts are provided by residues R358, 388–391, and 429–432; these read RDFS and GLCS. NADP(+) is bound by residues T472, 528–529, and 534–538; these read SR and KIYVQ. FAD is bound at residue W603.

Belongs to the NADPH-dependent diflavin oxidoreductase NDOR1 family. It in the N-terminal section; belongs to the flavodoxin family. The protein in the C-terminal section; belongs to the flavoprotein pyridine nucleotide cytochrome reductase family. As to quaternary structure, interacts with DRE2; as part of the cytosolic iron-sulfur (Fe-S) protein assembly (CIA) machinery. FAD is required as a cofactor. The cofactor is FMN.

Its subcellular location is the cytoplasm. It localises to the mitochondrion. The catalysed reaction is 2 oxidized [2Fe-2S]-[protein] + NADPH = 2 reduced [2Fe-2S]-[protein] + NADP(+) + H(+). Functionally, NADPH-dependent reductase which is a central component of the cytosolic iron-sulfur (Fe-S) protein assembly (CIA) machinery. Transfers electrons from NADPH via its FAD and FMN prosthetic groups to the [2Fe-2S] cluster of DRE2, another key component of the CIA machinery. In turn, this reduced cluster provides electrons for assembly of cytosolic iron-sulfur cluster proteins. Positively controls H(2)O(2)-induced cell death. The protein is NADPH-dependent diflavin oxidoreductase 1 of Gibberella zeae (strain ATCC MYA-4620 / CBS 123657 / FGSC 9075 / NRRL 31084 / PH-1) (Wheat head blight fungus).